The chain runs to 399 residues: Coiled-coil domain-containing protein 85C-B (399 aa).

2 coiled-coil regions span residues 52–84 (NRSLQVHLHEIRNLKEINQKLQDDNQELRELCC) and 113–144 (KEVSTYQQKLKELEINQENVLRENAELKDIIL). The tract at residues 151-199 (NGAGSRSSIDSQSSLSNLNGGSGTVRDVGDGSSTSSGGSAGSPDHHHNH) is disordered. A compositionally biased stretch (low complexity) spans 155 to 169 (SRSSIDSQSSLSNLN).

This sequence belongs to the CCDC85 family.

The protein resides in the cell junction. It is found in the tight junction. Its subcellular location is the adherens junction. Its function is as follows. May play a role in cell-cell adhesion and epithelium development through its interaction with proteins of the beta-catenin family. May play an important role in cortical development, especially in the maintenance of radial glia. This chain is Coiled-coil domain-containing protein 85C-B (ccdc85cb), found in Danio rerio (Zebrafish).